A 141-amino-acid polypeptide reads, in one-letter code: Large ribosomal subunit protein uL11 (141 aa).

This sequence belongs to the universal ribosomal protein uL11 family. Part of the ribosomal stalk of the 50S ribosomal subunit. Interacts with L10 and the large rRNA to form the base of the stalk. L10 forms an elongated spine to which L12 dimers bind in a sequential fashion forming a multimeric L10(L12)X complex. Post-translationally, one or more lysine residues are methylated.

Forms part of the ribosomal stalk which helps the ribosome interact with GTP-bound translation factors. This is Large ribosomal subunit protein uL11 from Lactobacillus johnsonii (strain CNCM I-12250 / La1 / NCC 533).